The chain runs to 312 residues: GATA zinc finger domain-containing protein 20 (312 aa).

2 disordered regions span residues 1-45 (MGKR…PQQP) and 213-232 (TIGS…TNTN). Positions 29–45 (QQQQQQQEQQPQQPQQP) are enriched in low complexity. The segment at 260–287 (CYVCGVTETPYWRRGTDEGVMVDLCNAC) adopts a GATA-type zinc-finger fold.

In Dictyostelium discoideum (Social amoeba), this protein is GATA zinc finger domain-containing protein 20 (gtaT).